Here is a 649-residue protein sequence, read N- to C-terminus: Flavin-dependent oxygenase ucdD (649 aa).

Residues glutamine 92, isoleucine 185, tyrosine 344, aspartate 370, and serine 386 each coordinate FAD.

The protein belongs to the PheA/TfdB FAD monooxygenase family. As to quaternary structure, homodimer. Requires FAD as cofactor.

It participates in secondary metabolite biosynthesis. Functionally, nonribosomal peptide synthetase that mediates the biosynthesis of usterphenyllins and uscandidusins, p-terphenyl derivatives. Within the pathway, ucdD catalyzes the formation of 3,15-dihydroxyterphenyllin via dihydroxylation at C-3 of ring A and C-15 of ring C of the terphenyllin intermediate. The pathway begin with the biosynthesis of 4-hydroxyphenylpyruvate (HPPA) from L-tyrosine, possibly by the aminotransferase ucdG. The nonribosomal peptide synthetase ucdA then condenses two HPPA units to produce atromentin. The key step in this pathway is the reduction and dehydration of atromentin to form a terphenyl triol intermediate, performed by the NAD-dependent dehydrogenase ucdB. Further O-methylation by the methyltransferase ucdC forms terphenyllin carrying two methoxy moieties at C-9 and C-12, and subsequent dihydroxylation at C-3 of ring A and C-15 of ring C by the flavin-dependent oxygenase ucdD leads to 3,15-dihydroxyterphenyllin. Prenylation by ucdE at position C-5 of ring A forms usterphenyllin B, and is followed by a second prenylation at position C-14 of ring C to form usterphenyllin A. The following furan ring formation that leads to uscandidusins A and B was proven to be an unexpected spontaneous non-enzymatic reaction. This chain is Flavin-dependent oxygenase ucdD, found in Aspergillus ustus.